The following is a 372-amino-acid chain: N-methyl-L-tryptophan oxidase (372 aa).

4 to 34 contacts FAD; the sequence is DLIIIGSGSVGAAAGYYATRAGLKVLMTDAH. Position 307 is an S-8alpha-FAD cysteine (C307).

This sequence belongs to the MSOX/MTOX family. MTOX subfamily. Monomer. Requires FAD as cofactor.

The enzyme catalyses N(alpha)-methyl-L-tryptophan + O2 + H2O = L-tryptophan + formaldehyde + H2O2. Functionally, catalyzes the oxidative demethylation of N-methyl-L-tryptophan. This is N-methyl-L-tryptophan oxidase from Salmonella typhi.